The chain runs to 352 residues: Holliday junction branch migration complex subunit RuvB (352 aa).

Positions Ala4–Tyr185 are large ATPase domain (RuvB-L). Residues Ile24, Arg25, Gly66, Lys69, Thr70, Thr71, Glu132 to Phe134, Arg175, Tyr185, and Arg222 each bind ATP. Thr70 serves as a coordination point for Mg(2+). The small ATPAse domain (RuvB-S) stretch occupies residues Ser186–Asp256. The tract at residues Glu259 to Asp352 is head domain (RuvB-H). Positions 295, 314, and 319 each coordinate DNA.

The protein belongs to the RuvB family. As to quaternary structure, homohexamer. Forms an RuvA(8)-RuvB(12)-Holliday junction (HJ) complex. HJ DNA is sandwiched between 2 RuvA tetramers; dsDNA enters through RuvA and exits via RuvB. An RuvB hexamer assembles on each DNA strand where it exits the tetramer. Each RuvB hexamer is contacted by two RuvA subunits (via domain III) on 2 adjacent RuvB subunits; this complex drives branch migration. In the full resolvosome a probable DNA-RuvA(4)-RuvB(12)-RuvC(2) complex forms which resolves the HJ.

The protein resides in the cytoplasm. It catalyses the reaction ATP + H2O = ADP + phosphate + H(+). Its function is as follows. The RuvA-RuvB-RuvC complex processes Holliday junction (HJ) DNA during genetic recombination and DNA repair, while the RuvA-RuvB complex plays an important role in the rescue of blocked DNA replication forks via replication fork reversal (RFR). RuvA specifically binds to HJ cruciform DNA, conferring on it an open structure. The RuvB hexamer acts as an ATP-dependent pump, pulling dsDNA into and through the RuvAB complex. RuvB forms 2 homohexamers on either side of HJ DNA bound by 1 or 2 RuvA tetramers; 4 subunits per hexamer contact DNA at a time. Coordinated motions by a converter formed by DNA-disengaged RuvB subunits stimulates ATP hydrolysis and nucleotide exchange. Immobilization of the converter enables RuvB to convert the ATP-contained energy into a lever motion, pulling 2 nucleotides of DNA out of the RuvA tetramer per ATP hydrolyzed, thus driving DNA branch migration. The RuvB motors rotate together with the DNA substrate, which together with the progressing nucleotide cycle form the mechanistic basis for DNA recombination by continuous HJ branch migration. Branch migration allows RuvC to scan DNA until it finds its consensus sequence, where it cleaves and resolves cruciform DNA. This Pseudomonas fluorescens (strain SBW25) protein is Holliday junction branch migration complex subunit RuvB.